A 1050-amino-acid polypeptide reads, in one-letter code: Beta-galactosidase (1050 aa).

The substrate site is built by Asn110 and Asp209. Asp209 provides a ligand contact to Na(+). 3 residues coordinate Mg(2+): Glu432, His434, and Glu477. Substrate-binding positions include Glu477 and 553 to 556; that span reads EYAH. Glu477 serves as the catalytic Proton donor. Glu553 (nucleophile) is an active-site residue. Asn613 lines the Mg(2+) pocket. Phe617 and Asn620 together coordinate Na(+). Asn620 and Trp1023 together coordinate substrate.

Belongs to the glycosyl hydrolase 2 family. In terms of assembly, homotetramer. Mg(2+) is required as a cofactor. Na(+) serves as cofactor.

The catalysed reaction is Hydrolysis of terminal non-reducing beta-D-galactose residues in beta-D-galactosides.. This is Beta-galactosidase from Yersinia enterocolitica serotype O:8 / biotype 1B (strain NCTC 13174 / 8081).